The sequence spans 135 residues: uncharacterized protein (135 aa).

The HTH merR-type domain occupies 2–71 (TYTTAKAAEK…LKDIKRFAEC (70 aa)). The H-T-H motif DNA-binding region spans 5-24 (TAKAAEKIGISAYTLRFYDK).

This is an uncharacterized protein from Haemophilus influenzae (strain ATCC 51907 / DSM 11121 / KW20 / Rd).